A 228-amino-acid polypeptide reads, in one-letter code: Protein-L-isoaspartate O-methyltransferase (228 aa).

Residues 1–20 (MVAVSLKMSQPAAPPPPMGE) form a disordered region. Ser76 is a catalytic residue.

Belongs to the methyltransferase superfamily. L-isoaspartyl/D-aspartyl protein methyltransferase family.

The protein localises to the cytoplasm. The catalysed reaction is [protein]-L-isoaspartate + S-adenosyl-L-methionine = [protein]-L-isoaspartate alpha-methyl ester + S-adenosyl-L-homocysteine. Its function is as follows. Catalyzes the methyl esterification of L-isoaspartyl residues in peptides and proteins that result from spontaneous decomposition of normal L-aspartyl and L-asparaginyl residues. It plays a role in the repair and/or degradation of damaged proteins. The chain is Protein-L-isoaspartate O-methyltransferase from Magnetococcus marinus (strain ATCC BAA-1437 / JCM 17883 / MC-1).